We begin with the raw amino-acid sequence, 479 residues long: Probable periplasmic serine endoprotease DegP-like (479 aa).

The first 27 residues, 1–27 (MSIPRLKSYLSMFAAVLMLGQVLSAQA), serve as a signal peptide directing secretion. Residues His117, Asp147, and Ser220 each act as charge relay system in the active site. Residues 218–220 (GNS) and 275–279 (LGVVI) contribute to the substrate site. 2 PDZ domains span residues 264–355 (LKKD…IRNG) and 361–468 (DVTI…LRQG). The interval 368–395 (PDDDADIGTGTGADGSAERSSNRLGVSV) is disordered.

This sequence belongs to the peptidase S1C family.

The protein resides in the periplasm. The enzyme catalyses Acts on substrates that are at least partially unfolded. The cleavage site P1 residue is normally between a pair of hydrophobic residues, such as Val-|-Val.. Might be efficient in the degradation of transiently denatured and unfolded proteins which accumulate in the periplasm following stress conditions. This is Probable periplasmic serine endoprotease DegP-like from Pseudomonas putida (strain W619).